Reading from the N-terminus, the 919-residue chain is Periodic tryptophan protein 2 homolog (919 aa).

WD repeat units lie at residues 12 to 50 (GTVYRRGNLNFTCDGNSVISPVGNRVTVFDLKNNKSDTL), 53 to 93 (ATRY…LHHF), 94 to 132 (HFKGSVHSVSFSPDGRKFVVTKGNIAQMYHAPGKKREFN), 142 to 181 (GPYDETTCIDWTDDSRCFVVGSKDMSTWVFGAERWDNLIY), and 186 to 225 (GHKDAIVACFFESNSLDLYSLSQDGVLCMWQCDTPPEGLR). The segment at 238 to 267 (QREEEEEEEEDQEGDRETTIRGKATPAEEE) is disordered. Residues 240-251 (EEEEEEEEDQEG) show a composition bias toward acidic residues. Basic and acidic residues predominate over residues 252 to 267 (DRETTIRGKATPAEEE). WD repeat units follow at residues 286–325 (GDFNNLTAAAFHKKSHLLVTGFASGIFHLHELPEFNLIHS), 328–368 (ISDQ…YVLK), 371–410 (GHFNSMVALAYSPDGQYIVTGGDDGKVKVWNTLSGFCFVT), 413–452 (EHSSGVTGVTFTATGYVVVTSSMDGTVRAFDLHRYRNFRT), 456–498 (PRPT…DVLS), 499–538 (GHEGPISGLCFNPMKSVLASASWDKTVRLWDMFDSWRTKE), 541–580 (ALTSDALAVTFRPDGAELAVATLNSQITFWDPENAVQTGS), 603–642 (AKGKAFTALCYSADGHSILAGGMSKFVCIYHVREQILMKR), and 700–740 (KPEI…DPFE). The segment at 882-919 (TKRSLDPLGSEEEAEASEDDSLHLLGGGGRDSEEEMLA) is disordered. The segment covering 890-900 (GSEEEAEASED) has biased composition (acidic residues). 2 positions are modified to phosphoserine: serine 898 and serine 902.

The protein belongs to the WD repeat PWP2 family. In terms of assembly, part of the small subunit (SSU) processome, composed of more than 70 proteins and the RNA chaperone small nucleolar RNA (snoRNA) U3.

It is found in the nucleus. The protein resides in the nucleolus. Its function is as follows. Part of the small subunit (SSU) processome, first precursor of the small eukaryotic ribosomal subunit. During the assembly of the SSU processome in the nucleolus, many ribosome biogenesis factors, an RNA chaperone and ribosomal proteins associate with the nascent pre-rRNA and work in concert to generate RNA folding, modifications, rearrangements and cleavage as well as targeted degradation of pre-ribosomal RNA by the RNA exosome. The polypeptide is Periodic tryptophan protein 2 homolog (Homo sapiens (Human)).